We begin with the raw amino-acid sequence, 344 residues long: Follistatin (344 aa).

Residues 1-29 (MVCARHQPGGLCLLLLLLCQFMEDRSAQA) form the signal peptide. A TB domain is found at 30–103 (GNCWLRQAKN…TCENVDCGPG (74 aa)). 18 disulfides stabilise this stretch: C32-C55, C42-C88, C56-C91, C95-C106, C100-C116, C118-C150, C122-C143, C132-C164, C168-C179, C173-C189, C192-C225, C196-C218, C207-C239, C245-C256, C250-C267, C270-C302, C274-C295, and C284-C316. One can recognise a Follistatin-like 1 domain in the interval 94–117 (TCENVDCGPGKKCRMNKKNKPRCV). In terms of domain architecture, Kazal-like 1 spans 112–166 (NKPRCVCAPDCSNITWKGPVCGLDGKTYRNECALLKARCKEQPELEVQYQGKCKK). N124 carries N-linked (GlcNAc...) asparagine glycosylation. The Follistatin-like 2 domain maps to 167–190 (TCRDVFCPGSSTCVVDQTNNAYCV). Residues 186–241 (NAYCVTCNRICPEPSSSEQSLCGNDGVTYSSACHLRKATCLLGRSIGLAYEGKCIK) enclose the Kazal-like 2 domain. The Follistatin-like 3 domain maps to 244 to 268 (SCEDIQCGGGKKCLWDFKVGRGRCS). The Kazal-like 3 domain occupies 264-318 (RGRCSLCDELCPDSKSDEPVCASDNATYASECAMKEAACSSGVLLEVKHSGSCNS). N288 carries an N-linked (GlcNAc...) asparagine glycan. The disordered stretch occupies residues 315-344 (SCNSISEETEEEEEEEDQDYSFPISSTLEW). Over residues 321–333 (EETEEEEEEEDQD) the composition is skewed to acidic residues.

In terms of assembly, interacts with GDF11. Interacts with activin A/INHBA. Interacts with myostatin/MSTN.

The protein localises to the secreted. It is found in the nucleus. It localises to the nucleolus. Multifunctional regulatory protein whose primary function is to antagonize members of the transforming growth factor beta (TGF-beta) superfamily including activin, myostatin, GDF11 or bone morphogenetic proteins (BMPs). Mechanistically, binds to these ligands in the extracellular space, blocking their type II receptor-binding site to inhibit downstream signaling. Plays an essential role in muscle fiber formation and growth both by preventing the repressive effects of myostatin and through SMAD3/AKT/mTOR signaling independently of myostatin. Also promotes neural differentiation by antagonizing the action BMP4. Acts as a specific inhibitor of the biosynthesis and secretion of pituitary follicle stimulating hormone (FSH) by sequestering activin A/INHBA. On the other hand, translocates into the nucleus where it down-regulates rRNA synthesis and ribosome biogenesis to maintain cellular energy homeostasis by binding to rDNA. This is Follistatin from Rattus norvegicus (Rat).